A 346-amino-acid chain; its full sequence is NADH-ubiquinone oxidoreductase chain 2 (346 aa).

11 consecutive transmembrane segments (helical) span residues 3-23 (PLIF…VMMS), 25-45 (HWLM…PILM), 59-79 (YFLT…INLM), 96-116 (IIMT…FWVP), 122-142 (ISLT…MSIL), 149-169 (INLN…GWGG), 178-198 (IMAY…VYNP), 200-220 (LTML…MLFI), 242-262 (TLIL…GFMP), 274-294 (SSII…YFYM), and 322-342 (ITLL…TPML).

This sequence belongs to the complex I subunit 2 family. Core subunit of respiratory chain NADH dehydrogenase (Complex I) which is composed of 45 different subunits. Interacts with TMEM242.

Its subcellular location is the mitochondrion inner membrane. It carries out the reaction a ubiquinone + NADH + 5 H(+)(in) = a ubiquinol + NAD(+) + 4 H(+)(out). Its function is as follows. Core subunit of the mitochondrial membrane respiratory chain NADH dehydrogenase (Complex I) which catalyzes electron transfer from NADH through the respiratory chain, using ubiquinone as an electron acceptor. Essential for the catalytic activity and assembly of complex I. This chain is NADH-ubiquinone oxidoreductase chain 2, found in Equus caballus (Horse).